The chain runs to 281 residues: 3-methyl-2-oxobutanoate hydroxymethyltransferase (281 aa).

Mg(2+) contacts are provided by D44 and D83. 3-methyl-2-oxobutanoate contacts are provided by residues 44–45 (DS), D83, and K112. Residue E114 participates in Mg(2+) binding. E180 functions as the Proton acceptor in the catalytic mechanism. The segment at 251 to 281 (RNGTFPGPEHSSRMDPAELAAALGSQDQATE) is disordered.

The protein belongs to the PanB family. In terms of assembly, homodecamer; pentamer of dimers. Mg(2+) is required as a cofactor.

The protein localises to the cytoplasm. The enzyme catalyses 3-methyl-2-oxobutanoate + (6R)-5,10-methylene-5,6,7,8-tetrahydrofolate + H2O = 2-dehydropantoate + (6S)-5,6,7,8-tetrahydrofolate. It functions in the pathway cofactor biosynthesis; (R)-pantothenate biosynthesis; (R)-pantoate from 3-methyl-2-oxobutanoate: step 1/2. In terms of biological role, catalyzes the reversible reaction in which hydroxymethyl group from 5,10-methylenetetrahydrofolate is transferred onto alpha-ketoisovalerate to form ketopantoate. The sequence is that of 3-methyl-2-oxobutanoate hydroxymethyltransferase from Chloroflexus aurantiacus (strain ATCC 29364 / DSM 637 / Y-400-fl).